A 1606-amino-acid chain; its full sequence is Fatty acid synthase apf5 (1606 aa).

One can recognise a Carrier domain in the interval 142–218 (VPVSAILISL…ETLSTSHDGQ (77 aa)). Ser177 is subject to O-(pantetheine 4'-phosphoryl)serine. The Ketosynthase family 3 (KS3) domain occupies 996–1539 (KESLIEVALQ…QKGGQALLVH (544 aa)). Active-site for beta-ketoacyl synthase activity residues include Cys1182, His1424, and His1465.

It belongs to the thiolase-like superfamily. Fungal fatty acid synthetase subunit alpha family.

The enzyme catalyses a fatty acyl-[ACP] + malonyl-[ACP] + H(+) = a 3-oxoacyl-[ACP] + holo-[ACP] + CO2. Its pathway is secondary metabolite biosynthesis. Functionally, fatty acid synthase; part of the gene cluster that mediates the biosynthesis of the cyclic tetrapeptide apicidin F (APF). The non-ribosomal peptide synthetase apf1 incorporates four different amino acids to produce apicidin F: L-phenylalanine, D-pipecolic acid (D-pip), N-methoxy-L-tryptophan and L-2-aminooctanedioic acid. L-Phenylalanine is the only proteinogenic amino acid directly used by apf1. The 3 other apf1 substrates are non-proteinogenic and have to be modified by other enzymes of the cluster. Lysine is converted to delta-1-pyrroline-5-carboxylate (P5C) which is reduced to L-pipecolic acid (L-pip) by apf3. L-pip is epimerized to D-pip, probably by apf1 activity, prior to incorporation. L-Tryptophan is N-oxidyzed by one of the cytochrome P450 monooxygenases (apf7 or apf8), and further methylated at the hydroxy group by the O-methyltransferase apf6 to yield N-methoxy-L-tryptophan. The synthesis of the fourth apf1 substrate is more complex. The fatty acid synthase apf5 is involved in the synthesis of the octanoic acid backbone of L-2-aminooctanedioic acid by fixing one acetyl-CoA unit and three malonyl-CoA units. Then one of the cytochrome P450 monooxygenases (apf7 or apf8) may oxidize this backbone to 2-oxooctanoic acid. The aminotransferase apf4 is predicted to catalyze the exchange of the keto group with an amino group. The next step would be the oxidation of 2-aminooctanoic acid by one of the cytochrome P450 monooxygenases (apf7 or apf8). The last step is the oxidation of 2-amino-8-hydroxyoctanoic acid to 2-aminooctanedioic acid is catalyzed by the FAD-dependent monooxygenase apf9. The polypeptide is Fatty acid synthase apf5 (Gibberella fujikuroi (strain CBS 195.34 / IMI 58289 / NRRL A-6831) (Bakanae and foot rot disease fungus)).